Consider the following 232-residue polypeptide: 7-cyano-7-deazaguanine synthase (232 aa).

8 to 18 (FSGGQDSTTCL) provides a ligand contact to ATP. Zn(2+) contacts are provided by C189, C198, C201, and C204.

It belongs to the QueC family. Zn(2+) is required as a cofactor.

The enzyme catalyses 7-carboxy-7-deazaguanine + NH4(+) + ATP = 7-cyano-7-deazaguanine + ADP + phosphate + H2O + H(+). Its pathway is purine metabolism; 7-cyano-7-deazaguanine biosynthesis. In terms of biological role, catalyzes the ATP-dependent conversion of 7-carboxy-7-deazaguanine (CDG) to 7-cyano-7-deazaguanine (preQ(0)). The sequence is that of 7-cyano-7-deazaguanine synthase from Yersinia enterocolitica serotype O:8 / biotype 1B (strain NCTC 13174 / 8081).